Here is a 386-residue protein sequence, read N- to C-terminus: Patatin-B1 (386 aa).

Residues 1–23 (MATTKSFLILFFMILATTSSTCA) form the signal peptide. The PNPLA domain occupies 32–229 (LSIDGGGIKG…TVGDPALLSL (198 aa)). Positions 36–41 (GGGIKG) match the GXGXXG motif. A GXSXG motif is present at residues 75–79 (GTSTG). Catalysis depends on Ser77, which acts as the Nucleophile. A glycan (N-linked (GlcNAc...) asparagine) is linked at Asn115. The Proton acceptor role is filled by Asp215. Positions 215-217 (DGG) match the DGA/G motif.

The protein belongs to the patatin family.

It is found in the vacuole. In terms of biological role, probable lipolytic acyl hydrolase (LAH), an activity which is thought to be involved in the response of tubers to pathogens. The chain is Patatin-B1 (PATB1) from Solanum tuberosum (Potato).